Here is a 189-residue protein sequence, read N- to C-terminus: Peptidyl-tRNA hydrolase (189 aa).

Tyr15 provides a ligand contact to tRNA. The Proton acceptor role is filled by His20. Phe66, Asn68, and Asn114 together coordinate tRNA.

This sequence belongs to the PTH family. As to quaternary structure, monomer.

The protein localises to the cytoplasm. The catalysed reaction is an N-acyl-L-alpha-aminoacyl-tRNA + H2O = an N-acyl-L-amino acid + a tRNA + H(+). Functionally, hydrolyzes ribosome-free peptidyl-tRNAs (with 1 or more amino acids incorporated), which drop off the ribosome during protein synthesis, or as a result of ribosome stalling. Its function is as follows. Catalyzes the release of premature peptidyl moieties from peptidyl-tRNA molecules trapped in stalled 50S ribosomal subunits, and thus maintains levels of free tRNAs and 50S ribosomes. This is Peptidyl-tRNA hydrolase from Streptococcus equi subsp. zooepidemicus (strain H70).